Here is a 53-residue protein sequence, read N- to C-terminus: Large ribosomal subunit protein bL32 (53 aa).

The span at 1–20 (MAVPKRRVSHTRAAKRRTHY) shows a compositional bias: basic residues. The disordered stretch occupies residues 1–53 (MAVPKRRVSHTRAAKRRTHYKLTLPMPVKDADGTWRMPHHMNMTTGEYKTTKA). Residues 42 to 53 (NMTTGEYKTTKA) are compositionally biased toward polar residues.

Belongs to the bacterial ribosomal protein bL32 family.

This is Large ribosomal subunit protein bL32 from Sulfurovum sp. (strain NBC37-1).